Here is a 141-residue protein sequence, read N- to C-terminus: NADPH-dependent 7-cyano-7-deazaguanine reductase (141 aa).

The active-site Thioimide intermediate is C34. Residue D41 is the Proton donor of the active site. Substrate is bound by residues 56–58 and 75–76; these read VEL and HE.

This sequence belongs to the GTP cyclohydrolase I family. QueF type 1 subfamily.

It localises to the cytoplasm. It carries out the reaction 7-aminomethyl-7-carbaguanine + 2 NADP(+) = 7-cyano-7-deazaguanine + 2 NADPH + 3 H(+). It participates in tRNA modification; tRNA-queuosine biosynthesis. Functionally, catalyzes the NADPH-dependent reduction of 7-cyano-7-deazaguanine (preQ0) to 7-aminomethyl-7-deazaguanine (preQ1). The protein is NADPH-dependent 7-cyano-7-deazaguanine reductase of Acidithiobacillus ferrooxidans (strain ATCC 23270 / DSM 14882 / CIP 104768 / NCIMB 8455) (Ferrobacillus ferrooxidans (strain ATCC 23270)).